The following is a 968-amino-acid chain: Polycystin-2 (968 aa).

Residues 1–11 are compositionally biased toward polar residues; sequence MVNSSRVQPQQ. 2 disordered regions span residues 1–28 and 58–181; these read MVNS…DPGR and RIRQ…LPLE. At 1–219 the chain is on the cytoplasmic side; the sequence is MVNSSRVQPQ…STNREKYLKS (219 aa). Residues 62-83 are compositionally biased toward low complexity; sequence AAARDPPAGAAASPSPPLSSCS. 2 positions are modified to phosphoserine: Ser-76 and Ser-80. Acidic residues predominate over residues 95–107; the sequence is EAEEEEEEVEGEE. A compositionally biased stretch (low complexity) spans 123 to 139; sequence RRSAASSAVSSVGARSR. Position 137 is an omega-N-methylarginine (Arg-137). A helical transmembrane segment spans residues 220–241; that stretch reads VLRELVTYLLFLIVLCILTYGM. Topologically, residues 242 to 468 are extracellular; it reads MSSNVYYYTR…PLKLIRYVTT (227 aa). N-linked (GlcNAc...) asparagine glycosylation is found at Asn-299 and Asn-305. Asn-328 is a glycosylation site (N-linked (GlcNAc...) (complex) asparagine). An intrachain disulfide couples Cys-331 to Cys-344. N-linked (GlcNAc...) asparagine glycosylation is found at Asn-362 and Asn-375. The chain crosses the membrane as a helical span at residues 469-489; that stretch reads FDFFLAACEIIFCFFIFYYVV. The Cytoplasmic portion of the chain corresponds to 490–505; the sequence is EEILEIRIHKLHYFRS. Residues 506-526 form a helical membrane-spanning segment; that stretch reads FWNCLDVVIVVLSVVAIGINI. The Extracellular segment spans residues 527–552; sequence YRTSNVEVLLQFLEDQNTFPNFEHLA. A helical transmembrane segment spans residues 553-573; that stretch reads YWQIQFNNIAAVTVFFVWIKL. A cholesterol-binding site is contributed by Gln-557. The Cytoplasmic portion of the chain corresponds to 574–597; the sequence is FKFINFNRTMSQLSTTMSRCAKDL. A helical membrane pass occupies residues 598–619; the sequence is FGFAIMFFIIFLAYAQLAYLVF. The Extracellular segment spans residues 620 to 631; the sequence is GTQVDDFSTFQE. Residues 632-646 constitute an intramembrane region (pore-forming); sequence CIFTQFRIILGDINF. Ca(2+) is bound at residue Leu-641. The short motif at 641 to 643 is the Selectivity filter element; that stretch reads LGD. Residues 647–654 lie on the Extracellular side of the membrane; that stretch reads AEIEEANR. A helical membrane pass occupies residues 655 to 675; it reads VLGPIYFTTFVFFMFFILLNM. Residues 676 to 968 lie on the Cytoplasmic side of the membrane; sequence FLAIINDTYS…GGNGSSNVHV (293 aa). The region spanning 750-785 is the EF-hand domain; the sequence is HTDAEIEAIFTKYDQDGDQELTEHEHQQMRDDLEKE. 5 residues coordinate Ca(2+): Asp-763, Asp-765, Asp-767, Glu-769, and Glu-774. The segment at 764-831 is disordered; sequence QDGDQELTEH…HSSRRRGSIS (68 aa). Positions 770-795 are enriched in basic and acidic residues; the sequence is LTEHEHQQMRDDLEKEREDLDLDHSS. The segment covering 796–807 has biased composition (low complexity); it reads LPRPMSSRSFPR. Phosphoserine occurs at positions 801, 808, 812, and 829. Residues 803 to 822 form a linker region; the sequence is RSFPRSLDDSEEDDDEDSGH. The important for interaction with PACS1 and PACS2 stretch occupies residues 810-821; sequence DDSEEDDDEDSG. Residues 833–872 adopt a coiled-coil conformation; the sequence is GVSYEEFQVLVRRVDRMEHSIGSIVSKIDAVIVKLEIMER. Residues 917–968 are disordered; the sequence is ESDDAASQISHGLGTPVGLNGQPRPRSSRPSSSQSTEGMEGAGGNGSSNVHV. Over residues 938–951 the composition is skewed to low complexity; that stretch reads QPRPRSSRPSSSQS.

It belongs to the polycystin family. Homotetramer. Component of the heterotetrameric polycystin channel complex with PKD1; the tetramer contains one PKD1 chain and three PKD2 chains. Isoform 1 interacts with PKD1 while isoform 3 does not. Interacts with PKD1L1; probably forms a Ca(2+) channel. Interacts with CD2AP. Interacts with HAX1. Interacts with NEK8. Part of a complex containing AKAP5, ADCY5, ADCY6 and PDE4C. Interacts (via C-terminus) with TRPV4 (via C-terminus). Interacts (via C-terminal acidic region) with PACS1 and PACS2; these interactions retain the protein in the endoplasmic reticulum and prevent trafficking to the cell membrane. Interacts with TMEM33. Form a heterotetramer with TRPC1 with a 2:2 stoichiometry; has distinct channel properties separate from PKD2 or TRPC1 homomers alone. Interacts with TMEM120A; TMEM120A inhibits PKD2 channel activity through the physical association of PKD2 with TMEM120A. Interacts (via N-terminus) with RYR2; regulates RYR2 channel activity. Phosphorylated. Phosphorylation is important for protein function; a mutant that lacks the N-terminal phosphorylation sites cannot complement a zebrafish pkd2-deficient mutant. PKD-mediated phosphorylation at the C-terminus regulates its function in the release of Ca(2+) stores from the endoplasmic reticulum. Phosphorylation at Ser-812 regulates PKD2 trafficking. Phosphorylation at Ser-76 is required for PKD2 trafficking to or retention at the lateral plasma membrane. Phosphorylation at Ser-801, Ser-812 and Ser-829 regulates PKD2 channel activity. In terms of processing, N-glycosylated. The four subunits in a tetramer probably differ in the extent of glycosylation; simultaneous glycosylation of all experimentally validated sites would probably create steric hindrance. Thus, glycosylation at Asn-305 is not compatible with glycosylation at Asn-328; only one of these two residues is glycosylated at a given time. Post-translationally, sumoylated by SUMO1; sumoylation regulates PKD2 membrane recycling and is necessary for intravascular pressure-induced arterial contractility. In terms of tissue distribution, detected in fetal and adult kidney. Detected at the thick ascending limb of the loop of Henle, at distal tubules, including the distal convoluted tubule and cortical collecting tubules, with weak staining of the collecting duct. Detected on placenta syncytiotrophoblasts (at protein level). Strongly expressed in ovary, fetal and adult kidney, testis, and small intestine. Not detected in peripheral leukocytes.

It localises to the cell projection. The protein localises to the cilium membrane. The protein resides in the endoplasmic reticulum membrane. Its subcellular location is the cell membrane. It is found in the basolateral cell membrane. It localises to the cytoplasmic vesicle membrane. The protein localises to the golgi apparatus. The protein resides in the vesicle. Its subcellular location is the secreted. It is found in the extracellular exosome. The catalysed reaction is K(+)(in) = K(+)(out). The enzyme catalyses Na(+)(in) = Na(+)(out). It carries out the reaction Ca(2+)(in) = Ca(2+)(out). Its activity is regulated as follows. Channel activity is regulated by phosphorylation. Channel activity is regulated by intracellular Ca(2+). At the endoplasmic reticulum membrane (ER), TMEM33 enhances its channel activity. TMEM120A inhibits the channel activity of PKD2, and mediates mechanosensitivity of the PKD2-TMEM120A channel complex. PKD1/PKD2 complex on the plasma membrane is activated by PKD1 N-terminus. In terms of biological role, forms a nonselective cation channel. Can function as a homotetrameric ion channel or can form heteromer with PKD1. Displays distinct function depending on its subcellular localization and regulation by its binding partners. In primary cilium functions as a cation channel, with a preference for monovalent cations over divalent cations that allows K(+), Na(+) and Ca(2+) influx, with low selectivity for Ca(2+). Involved in fluid-flow mechanosensation by the primary cilium in renal epithelium. In the endoplasmic reticulum, likely functions as a K(+) channel to facilitate Ca(2+) release. The heterotetrameric PKD1/PKD2 channel has higher Ca(2+) permeability than homomeric PKD2 channel and acts as a primarily Ca(2+)-permeable channel. Interacts with and acts as a regulator of a number of other channels, such as TRPV4, TRPC1, IP3R, RYR2, ultimately further affecting intracellular signaling, to modulate intracellular Ca(2+) signaling. Together with TRPV4, forms mechano- and thermosensitive channels in cilium. In cardiomyocytes, PKD2 modulates Ca(2+) release from stimulated RYR2 receptors through direct association. Also involved in left-right axis specification via its role in sensing nodal flow; forms a complex with PKD1L1 in cilia to facilitate flow detection in left-right patterning. Acts as a regulator of cilium length together with PKD1. Mediates systemic blood pressure and contributes to the myogenic response in cerebral arteries though vasoconstriction. This is Polycystin-2 from Homo sapiens (Human).